The chain runs to 300 residues: Small ribosomal subunit protein uS2 (300 aa).

The tract at residues tryptophan 269–tryptophan 300 is disordered.

It belongs to the universal ribosomal protein uS2 family. Component of the small ribosomal subunit. Mature ribosomes consist of a small (40S) and a large (60S) subunit. The 40S subunit contains about 33 different proteins and 1 molecule of RNA (18S). The 60S subunit contains about 49 different proteins and 3 molecules of RNA (25S, 5.8S and 5S). Interacts with rps21.

Its subcellular location is the cytoplasm. Required for the assembly and/or stability of the 40S ribosomal subunit. Required for the processing of the 20S rRNA-precursor to mature 18S rRNA in a late step of the maturation of 40S ribosomal subunits. This chain is Small ribosomal subunit protein uS2 (rps0), found in Aspergillus terreus (strain NIH 2624 / FGSC A1156).